We begin with the raw amino-acid sequence, 92 residues long: Envelope glycoprotein J (92 aa).

A signal peptide spans 1–22 (MDRYAVRTWGIVGILGCAAVGA). Topologically, residues 23 to 49 (APTGPASDTTNATARLPTHPPLIRSGG) are extracellular. N33 carries an N-linked (GlcNAc...) asparagine; by host glycan. Residues 50-70 (FAVPLIVGGLCLMILGMACLL) traverse the membrane as a helical segment. Residues 71 to 92 (EVLRRLGRELARCCPHAGQFAP) lie on the Cytoplasmic side of the membrane.

Belongs to the alphaherpesvirinae glycoprotein J family.

Its subcellular location is the host Golgi apparatus membrane. The protein localises to the host endoplasmic reticulum membrane. It localises to the host endosome membrane. Its function is as follows. Functions as an activator of viral protein expression and virus production. In turn, promotes cell-to-cell spread as well as syncytia formation. In Homo sapiens (Human), this protein is Envelope glycoprotein J (gJ).